Here is a 253-residue protein sequence, read N- to C-terminus: 5'-nucleotidase SurE (253 aa).

A divalent metal cation contacts are provided by Asp8, Asp9, Ser39, and Asn92.

This sequence belongs to the SurE nucleotidase family. It depends on a divalent metal cation as a cofactor.

It localises to the cytoplasm. The catalysed reaction is a ribonucleoside 5'-phosphate + H2O = a ribonucleoside + phosphate. Its function is as follows. Nucleotidase that shows phosphatase activity on nucleoside 5'-monophosphates. The chain is 5'-nucleotidase SurE from Burkholderia thailandensis (strain ATCC 700388 / DSM 13276 / CCUG 48851 / CIP 106301 / E264).